We begin with the raw amino-acid sequence, 337 residues long: Monoacylglycerol lipase ABHD6 (337 aa).

Residues Met-1 to Met-8 are Extracellular-facing. The chain crosses the membrane as a helical; Signal-anchor for type II membrane protein span at residues Phe-9–Leu-29. At Trp-30–Asn-337 the chain is on the cytoplasmic side. The Nucleophile role is filled by Ser-148. Active-site charge relay system residues include Asp-278 and His-306.

It belongs to the AB hydrolase superfamily.

It is found in the late endosome membrane. The protein localises to the lysosome membrane. Its subcellular location is the mitochondrion membrane. The catalysed reaction is Hydrolyzes glycerol monoesters of long-chain fatty acids.. It carries out the reaction 1-octanoylglycerol + H2O = octanoate + glycerol + H(+). The enzyme catalyses 1-decanoylglycerol + H2O = decanoate + glycerol + H(+). It catalyses the reaction 1-dodecanoylglycerol + H2O = dodecanoate + glycerol + H(+). The catalysed reaction is 1-tetradecanoylglycerol + H2O = tetradecanoate + glycerol + H(+). It carries out the reaction 2-hexadecanoylglycerol + H2O = glycerol + hexadecanoate + H(+). The enzyme catalyses 2-(9Z-octadecenoyl)-glycerol + H2O = glycerol + (9Z)-octadecenoate + H(+). It catalyses the reaction 1-(9Z-octadecenoyl)-glycerol + H2O = glycerol + (9Z)-octadecenoate + H(+). The catalysed reaction is 2-(9Z,12Z-octadecadienoyl)-glycerol + H2O = (9Z,12Z)-octadecadienoate + glycerol + H(+). It carries out the reaction 2-(5Z,8Z,11Z,14Z-eicosatetraenoyl)-glycerol + H2O = glycerol + (5Z,8Z,11Z,14Z)-eicosatetraenoate + H(+). The enzyme catalyses 1-(5Z,8Z,11Z,14Z-eicosatetraenoyl)-glycerol + H2O = glycerol + (5Z,8Z,11Z,14Z)-eicosatetraenoate + H(+). It catalyses the reaction 1-(9Z,12Z-octadecadienoyl)-glycerol + H2O = (9Z,12Z)-octadecadienoate + glycerol + H(+). The catalysed reaction is 3-(9Z-octadecenoyl)-sn-glycero-1-phospho-(3'-(9Z-octadecenoyl)-1'-sn-glycerol) + H2O = 3-(9Z-octadecenoyl)-sn-glycero-1-phospho-(1'-sn-glycerol) + (9Z)-octadecenoate + H(+). It carries out the reaction (S,S)-2-(9Z-octadecenoyl)-sn-glycero-1-phospho-(2'-(9Z-octadecenoyl)-1'-sn-glycerol) + H2O = (S,S)-2-(9Z-octadecenoyl)-sn-glycero-1-phospho-(1'-sn-glycerol) + (9Z)-octadecenoate + H(+). The enzyme catalyses (R,R)-2-(9Z-octadecenoyl)-sn-glycero-3-phospho-(2'-(9Z-octadecenoyl)-3'-sn-glycerol) + H2O = (R,R)-2-(9Z-octadecenoyl)-sn-glycero-3-phospho-(3'-sn-glycerol) + (9Z)-octadecenoate + H(+). Lipase that preferentially hydrolysis medium-chain saturated monoacylglycerols including 2-arachidonoylglycerol. Through 2-arachidonoylglycerol degradation may regulate endocannabinoid signaling pathways. Also has a lysophosphatidyl lipase activity with a preference for lysophosphatidylglycerol among other lysophospholipids. Also able to degrade bis(monoacylglycero)phosphate (BMP) and constitutes the major enzyme for BMP catabolism. BMP, also known as lysobisphosphatidic acid, is enriched in late endosomes and lysosomes and plays a key role in the formation of intraluminal vesicles and in lipid sorting. This Rattus norvegicus (Rat) protein is Monoacylglycerol lipase ABHD6.